The sequence spans 321 residues: MADRDSGSEQGGAALGSGGSLGHPGSGSGSGGGGGGGGGGGGSGGGGGAPGGLQHETQELASKRVDIQNKRFYLDVKQNAKGRFLKIAEVGAGGNKSRLTLSMSVAVEFRDYLGDFIEHYAQLGPSQPPDLAQAQDEPRRALKSEFLVRENRKYYMDLKENQRGRFLRIRQTVNRGPGLGSTQGQTIALPAQGLIEFRDALAKLIDDYGVEEEPAELPEGTSLTVDNKRFFFDVGSNKYGVFMRVSEVKPTYRNSITVPYKVWAKFGHTFCKYSEEMKKIQEKQREKRAACEQLHQQQQQQQEETTAATLLLQGEEEGEED.

The disordered stretch occupies residues 1-54 (MADRDSGSEQGGAALGSGGSLGHPGSGSGSGGGGGGGGGGGGSGGGGGAPGGLQ). At A2 the chain carries N-acetylalanine. Residues 9–51 (EQGGAALGSGGSLGHPGSGSGSGGGGGGGGGGGGSGGGGGAPG) are compositionally biased toward gly residues. S181 is modified (phosphoserine). Over residues 294-313 (LHQQQQQQQEETTAATLLLQ) the composition is skewed to low complexity. Residues 294-321 (LHQQQQQQQEETTAATLLLQGEEEGEED) form a disordered region.

This sequence belongs to the PUR DNA-binding protein family. Homodimer, heterodimer with PURB and heterotrimer with PURB and YBX1/Y-box protein 1. Interacts with FMR1; this interaction occurs in association with polyribosome.

Its subcellular location is the nucleus. Functionally, this is a probable transcription activator that specifically binds the purine-rich single strand of the PUR element located upstream of the c-Myc gene. May play a role in the initiation of DNA replication and in recombination. This is Transcriptional activator protein Pur-alpha (Pura) from Mus musculus (Mouse).